Consider the following 362-residue polypeptide: Melatonin receptor type 1B (362 aa).

The Extracellular portion of the chain corresponds to 1–42 (MSENGSFANCCEAGGWAVRPGWSGAGSARPSRTPRPPWVAPA). An N-linked (GlcNAc...) asparagine glycan is attached at Asn4. The chain crosses the membrane as a helical span at residues 43-63 (LSAVLIVTTAVDVVGNLLVIL). Over 64–76 (SVLRNRKLRNAGN) the chain is Cytoplasmic. A helical transmembrane segment spans residues 77–97 (LFLVSLALADLVVAFYPYPLI). Topologically, residues 98–115 (LVAIFYDGWALGEEHCKA) are extracellular. Cys113 and Cys190 form a disulfide bridge. The chain crosses the membrane as a helical span at residues 116 to 136 (SAFVMGLSVIGSVFNITAIAI). Residues 137–155 (NRYCYICHSMAYHRIYRRW) are Cytoplasmic-facing. A helical transmembrane segment spans residues 156–176 (HTPLHICLIWLLTVVALLPNF). Residues Asn175 and Gln194 each contribute to the melatonin site. Residues 177 to 200 (FVGSLEYDPRIYSCTFIQTASTQY) are Extracellular-facing. The chain crosses the membrane as a helical span at residues 201-221 (TAAVVVIHFLLPIAVVSFCYL). Topologically, residues 222-253 (RIWVLVLQARRKAKPESRLCLKPSDLRSFLTM) are cytoplasmic. A helical transmembrane segment spans residues 254-274 (FVVFVIFAICWAPLNCIGLAV). Residues 275-287 (AINPQEMAPQIPE) are Extracellular-facing. A helical transmembrane segment spans residues 288–308 (GLFVTSYLLAYFNSCLNAIVY). Over 309 to 362 (GLLNQNFRREYKRILLALWNPRHCIQDASKGSHAEGLQSPAPPIIGVQHQADAL) the chain is Cytoplasmic.

This sequence belongs to the G-protein coupled receptor 1 family. In terms of assembly, interacts with GPR61, GPR62 and GPR135. Expressed in retina and less in brain and hippocampus.

It localises to the cell membrane. Its function is as follows. High affinity receptor for melatonin. Likely to mediate the reproductive and circadian actions of melatonin. The activity of this receptor is mediated by pertussis toxin sensitive G proteins that inhibit adenylate cyclase activity. This is Melatonin receptor type 1B (MTNR1B) from Homo sapiens (Human).